A 61-amino-acid polypeptide reads, in one-letter code: Photosystem II reaction center X protein (61 aa).

A helical transmembrane segment spans residues 26–46 (IGSFIAAALLIVVPATAFLIF).

The protein belongs to the PsbX family. Type 2 subfamily. In terms of assembly, PSII consists of a core antenna complex that captures photons, and an electron transfer chain that converts photonic excitation into a charge separation. PSII forms dimeric complexes.

Its subcellular location is the cellular thylakoid membrane. Involved in the binding and/or turnover of quinones at the Q(B) site of Photosystem II. The protein is Photosystem II reaction center X protein of Prochlorococcus marinus (strain AS9601).